Reading from the N-terminus, the 132-residue chain is Small ribosomal subunit protein uS8 (132 aa).

It belongs to the universal ribosomal protein uS8 family. Part of the 30S ribosomal subunit. Contacts proteins S5 and S12.

In terms of biological role, one of the primary rRNA binding proteins, it binds directly to 16S rRNA central domain where it helps coordinate assembly of the platform of the 30S subunit. In Borrelia garinii subsp. bavariensis (strain ATCC BAA-2496 / DSM 23469 / PBi) (Borreliella bavariensis), this protein is Small ribosomal subunit protein uS8.